A 486-amino-acid chain; its full sequence is CDT1-like protein b (486 aa).

Disordered stretches follow at residues 273–294 (PEGGDDNSLRSTNSLARGPSRS) and 348–371 (VKDDISNESGDEKSNYEGDNASDD). Polar residues predominate over residues 281–294 (LRSTNSLARGPSRS). Residues 348–363 (VKDDISNESGDEKSNY) show a composition bias toward basic and acidic residues.

The protein belongs to the Cdt1 family. As to expression, expressed in proliferating (e.g. shoot and root apical meristems, organ primordia, guard cells and stomatal lineage) and endoreplicating cells (e.g. developing trichomes).

It is found in the nucleus. Its function is as follows. Member of the pre-replication complex. Regulates endoreduplication. Involved in the coordination of cell and plastid division. The polypeptide is CDT1-like protein b (CDT1B) (Arabidopsis thaliana (Mouse-ear cress)).